The following is a 206-amino-acid chain: N-(5'-phosphoribosyl)anthranilate isomerase (206 aa).

The protein belongs to the TrpF family.

It carries out the reaction N-(5-phospho-beta-D-ribosyl)anthranilate = 1-(2-carboxyphenylamino)-1-deoxy-D-ribulose 5-phosphate. Its pathway is amino-acid biosynthesis; L-tryptophan biosynthesis; L-tryptophan from chorismate: step 3/5. The sequence is that of N-(5'-phosphoribosyl)anthranilate isomerase from Azotobacter vinelandii (strain DJ / ATCC BAA-1303).